The sequence spans 154 residues: UPF0178 protein BAV3236 (154 aa).

The protein belongs to the UPF0178 family.

The protein is UPF0178 protein BAV3236 of Bordetella avium (strain 197N).